A 94-amino-acid polypeptide reads, in one-letter code: Pyrimidine/purine nucleoside phosphorylase (94 aa).

The protein belongs to the nucleoside phosphorylase PpnP family.

It carries out the reaction a purine D-ribonucleoside + phosphate = a purine nucleobase + alpha-D-ribose 1-phosphate. The catalysed reaction is adenosine + phosphate = alpha-D-ribose 1-phosphate + adenine. It catalyses the reaction cytidine + phosphate = cytosine + alpha-D-ribose 1-phosphate. The enzyme catalyses guanosine + phosphate = alpha-D-ribose 1-phosphate + guanine. It carries out the reaction inosine + phosphate = alpha-D-ribose 1-phosphate + hypoxanthine. The catalysed reaction is thymidine + phosphate = 2-deoxy-alpha-D-ribose 1-phosphate + thymine. It catalyses the reaction uridine + phosphate = alpha-D-ribose 1-phosphate + uracil. The enzyme catalyses xanthosine + phosphate = alpha-D-ribose 1-phosphate + xanthine. In terms of biological role, catalyzes the phosphorolysis of diverse nucleosides, yielding D-ribose 1-phosphate and the respective free bases. Can use uridine, adenosine, guanosine, cytidine, thymidine, inosine and xanthosine as substrates. Also catalyzes the reverse reactions. The polypeptide is Pyrimidine/purine nucleoside phosphorylase (Pectobacterium carotovorum subsp. carotovorum (strain PC1)).